The primary structure comprises 431 residues: Enolase (431 aa).

A (2R)-2-phosphoglycerate-binding site is contributed by Gln-164. Catalysis depends on Glu-206, which acts as the Proton donor. Residues Asp-243, Glu-286, and Asp-313 each coordinate Mg(2+). 4 residues coordinate (2R)-2-phosphoglycerate: Lys-338, Arg-367, Ser-368, and Lys-389. The active-site Proton acceptor is Lys-338.

Belongs to the enolase family. Mg(2+) serves as cofactor.

It localises to the cytoplasm. The protein resides in the secreted. It is found in the cell surface. It carries out the reaction (2R)-2-phosphoglycerate = phosphoenolpyruvate + H2O. It functions in the pathway carbohydrate degradation; glycolysis; pyruvate from D-glyceraldehyde 3-phosphate: step 4/5. Functionally, catalyzes the reversible conversion of 2-phosphoglycerate (2-PG) into phosphoenolpyruvate (PEP). It is essential for the degradation of carbohydrates via glycolysis. The chain is Enolase from Chloroflexus aggregans (strain MD-66 / DSM 9485).